We begin with the raw amino-acid sequence, 187 residues long: Glutathione-dependent formaldehyde-activating enzyme (187 aa).

Positions 20–167 constitute a CENP-V/GFA domain; that stretch reads FAGGTLVCKC…LKELGLEPYD (148 aa). Positions 27, 29, 48, 50, 53, 95, and 98 each coordinate Zn(2+).

It belongs to the Gfa family. The cofactor is Zn(2+).

It carries out the reaction S-(hydroxymethyl)glutathione = glutathione + formaldehyde. The protein operates within one-carbon metabolism; formaldehyde degradation; formate from formaldehyde (glutathione route): step 1/3. Functionally, catalyzes the condensation of formaldehyde and glutathione to S-hydroxymethylglutathione. This chain is Glutathione-dependent formaldehyde-activating enzyme, found in Bradyrhizobium sp. (strain BTAi1 / ATCC BAA-1182).